The sequence spans 420 residues: Exodeoxyribonuclease 7 large subunit (420 aa).

Belongs to the XseA family. As to quaternary structure, heterooligomer composed of large and small subunits.

The protein localises to the cytoplasm. The enzyme catalyses Exonucleolytic cleavage in either 5'- to 3'- or 3'- to 5'-direction to yield nucleoside 5'-phosphates.. Its function is as follows. Bidirectionally degrades single-stranded DNA into large acid-insoluble oligonucleotides, which are then degraded further into small acid-soluble oligonucleotides. The protein is Exodeoxyribonuclease 7 large subunit of Helicobacter pylori (strain J99 / ATCC 700824) (Campylobacter pylori J99).